The chain runs to 726 residues: uncharacterized protein (726 aa).

Catalysis depends on charge relay system residues Ser583 and His698.

This sequence belongs to the peptidase S9B family.

This is an uncharacterized protein from Sinorhizobium fredii (strain NBRC 101917 / NGR234).